A 306-amino-acid polypeptide reads, in one-letter code: Putative S-adenosyl-L-methionine-dependent methyltransferase Mvan_1345 (306 aa).

S-adenosyl-L-methionine is bound by residues aspartate 134 and 163–164; that span reads DL.

The protein belongs to the UPF0677 family.

Functionally, exhibits S-adenosyl-L-methionine-dependent methyltransferase activity. The sequence is that of Putative S-adenosyl-L-methionine-dependent methyltransferase Mvan_1345 from Mycolicibacterium vanbaalenii (strain DSM 7251 / JCM 13017 / BCRC 16820 / KCTC 9966 / NRRL B-24157 / PYR-1) (Mycobacterium vanbaalenii).